Here is a 691-residue protein sequence, read N- to C-terminus: UvrABC system protein C (691 aa).

The region spanning 20 to 97 (STSGVYLWKD…IKKHTPRYNI (78 aa)) is the GIY-YIG domain. One can recognise a UVR domain in the interval 204 to 239 (DATVARLEKRMKRAVRQEAFEAAARIRDDIQAIRCI). The segment at 662-691 (RSTTAPVREEYKEHEHDPQGESPGPGRKTD) is disordered. Over residues 668 to 680 (VREEYKEHEHDPQ) the composition is skewed to basic and acidic residues.

Belongs to the UvrC family. As to quaternary structure, interacts with UvrB in an incision complex.

The protein localises to the cytoplasm. The UvrABC repair system catalyzes the recognition and processing of DNA lesions. UvrC both incises the 5' and 3' sides of the lesion. The N-terminal half is responsible for the 3' incision and the C-terminal half is responsible for the 5' incision. This chain is UvrABC system protein C, found in Treponema pallidum (strain Nichols).